The primary structure comprises 441 residues: Putative F-box/FBD/LRR-repeat protein At4g00315 (441 aa).

The 47-residue stretch at 1–47 (MDKTSQLPDELLVKVLSFLPTKDAVRTSLLSMRWKSLWMWLPKLEYD) folds into the F-box domain. LRR repeat units lie at residues 57–82 (QGLARFITLSLLGHKAPAIESLSLKL), 87–115 (IGSIKPEDIYLWVSLAVHDSNVRELSLKL), 137–164 (ILKLKDEILVDVPRKVCLPSLKTLFLGR), 165–190 (VTYSDEDSLHRLLSNCPVLEDLVVER), 211–236 (LKMSCPCHLDGIMMNTPSLKYLKVTD), 243–271 (SDNESDSDSPRYFYDFEDMPKLEEADFVL), 293–318 (LGVYTEESLYHEGLVFNQLEQLKICS), and 319–344 (CDSDWSILLSRLLESSPNLRELEAYV). Residues 358–410 (QWGNQLNCVPKCLLSSLETFKWSEMYGLLQNQMDVAKYILRNARCLKSATIFF) form the FBD domain.

The chain is Putative F-box/FBD/LRR-repeat protein At4g00315 from Arabidopsis thaliana (Mouse-ear cress).